The primary structure comprises 421 residues: MANFDILEDLKWRGAINQETDEEGLRDYLAKHDDLALYCGTDPTGDSLHIGHLIPFMILKRFQLAGYKPVIVIGGGTGSIGDPSGRSTERVLQSEETIKHNEEALTAQMVKLFGTENFRIVNNRDWLGKMNLLEFLRDYGKLFQVNNMLNKEVVASRLKNGISFTEFSYQILQAIDFYILNRDHCVQMQIGGADQWGNITAGIDLIHRLEGADRPAFGLTIPLMLKADGTKFGKSAGGAVWLDPEKTSPYEFYQFWINQDDRDVIKYLKYFTFLKHEEIDALEEKVKTEPWKREAQKRLAEEVTKFVHGEEGLKEAQTVTEALFSGNVKDLTTKQVEIALAKAPSAESGAEKKNLVDFLVDTKIESSKRQAREDVNNGAIYVNGDRIQDTDFEVDPAAAFDGKFVIIRKGKKKYTLVHIKG.

Residue tyrosine 38 participates in L-tyrosine binding. Positions 43-52 (PTGDSLHIGH) match the 'HIGH' region motif. 2 residues coordinate L-tyrosine: tyrosine 169 and glutamine 173. Residues 231 to 235 (KFGKS) carry the 'KMSKS' region motif. Residue lysine 234 coordinates ATP. Residues 353-419 (KNLVDFLVDT…GKKKYTLVHI (67 aa)) enclose the S4 RNA-binding domain.

This sequence belongs to the class-I aminoacyl-tRNA synthetase family. TyrS type 1 subfamily. In terms of assembly, homodimer.

It localises to the cytoplasm. It catalyses the reaction tRNA(Tyr) + L-tyrosine + ATP = L-tyrosyl-tRNA(Tyr) + AMP + diphosphate + H(+). Functionally, catalyzes the attachment of tyrosine to tRNA(Tyr) in a two-step reaction: tyrosine is first activated by ATP to form Tyr-AMP and then transferred to the acceptor end of tRNA(Tyr). This is Tyrosine--tRNA ligase from Lactobacillus delbrueckii subsp. bulgaricus (strain ATCC 11842 / DSM 20081 / BCRC 10696 / JCM 1002 / NBRC 13953 / NCIMB 11778 / NCTC 12712 / WDCM 00102 / Lb 14).